The sequence spans 91 residues: Cell division protein ZapA (91 aa).

Residues 59-86 are a coiled coil; sequence TAVNIANEYLKLKEEYDRLAAKLRREKG.

Belongs to the ZapA family. Type 2 subfamily. Homodimer. Interacts with FtsZ.

The protein localises to the cytoplasm. Its function is as follows. Activator of cell division through the inhibition of FtsZ GTPase activity, therefore promoting FtsZ assembly into bundles of protofilaments necessary for the formation of the division Z ring. It is recruited early at mid-cell but it is not essential for cell division. In Geobacillus thermodenitrificans (strain NG80-2), this protein is Cell division protein ZapA.